We begin with the raw amino-acid sequence, 1022 residues long: Antigenic heat-stable 120 kDa protein (1022 aa).

Disordered regions lie at residues 1-41 (MSKD…QTTT) and 355-403 (GQSK…PQSQ). Residues 19–34 (EYTEEQKQTLEQEQKE) show a composition bias toward basic and acidic residues. 2 stretches are compositionally biased toward polar residues: residues 355 to 380 (GQSK…QYKQ) and 387 to 403 (PTNQ…PQSQ).

It localises to the cytoplasm. The protein is Antigenic heat-stable 120 kDa protein (sca4) of Rickettsia conorii (strain ATCC VR-613 / Malish 7).